Consider the following 513-residue polypeptide: ATP synthase subunit alpha (513 aa).

169–176 (GDRQTGKT) contributes to the ATP binding site.

The protein belongs to the ATPase alpha/beta chains family. As to quaternary structure, F-type ATPases have 2 components, CF(1) - the catalytic core - and CF(0) - the membrane proton channel. CF(1) has five subunits: alpha(3), beta(3), gamma(1), delta(1), epsilon(1). CF(0) has three main subunits: a(1), b(2) and c(9-12). The alpha and beta chains form an alternating ring which encloses part of the gamma chain. CF(1) is attached to CF(0) by a central stalk formed by the gamma and epsilon chains, while a peripheral stalk is formed by the delta and b chains.

The protein localises to the cell inner membrane. It carries out the reaction ATP + H2O + 4 H(+)(in) = ADP + phosphate + 5 H(+)(out). Its function is as follows. Produces ATP from ADP in the presence of a proton gradient across the membrane. The alpha chain is a regulatory subunit. This Histophilus somni (strain 2336) (Haemophilus somnus) protein is ATP synthase subunit alpha.